Reading from the N-terminus, the 266-residue chain is 5'-nucleotidase SurE (266 aa).

Residues Asp-8, Asp-9, Ser-39, and Asn-93 each contribute to the a divalent metal cation site.

The protein belongs to the SurE nucleotidase family. A divalent metal cation is required as a cofactor.

It localises to the cytoplasm. The catalysed reaction is a ribonucleoside 5'-phosphate + H2O = a ribonucleoside + phosphate. Its function is as follows. Nucleotidase that shows phosphatase activity on nucleoside 5'-monophosphates. This is 5'-nucleotidase SurE from Pyrobaculum arsenaticum (strain DSM 13514 / JCM 11321 / PZ6).